The primary structure comprises 271 residues: tRNA (guanine-N(7)-)-methyltransferase (271 aa).

The disordered stretch occupies residues 1-52 (MSDSHHTPEAASASLRHVRAKGEPRFPDGPKADPAGSHFERRIRSFQPRRSR). Residues 20–31 (AKGEPRFPDGPK) are compositionally biased toward basic and acidic residues. Residues Glu-93, Asp-118, Asp-145, and Asp-168 each contribute to the S-adenosyl-L-methionine site. Asp-168 is a catalytic residue. Residues Lys-172, Asp-204, and 241 to 244 (TRFE) each bind substrate.

The protein belongs to the class I-like SAM-binding methyltransferase superfamily. TrmB family.

It catalyses the reaction guanosine(46) in tRNA + S-adenosyl-L-methionine = N(7)-methylguanosine(46) in tRNA + S-adenosyl-L-homocysteine. It functions in the pathway tRNA modification; N(7)-methylguanine-tRNA biosynthesis. Functionally, catalyzes the formation of N(7)-methylguanine at position 46 (m7G46) in tRNA. The protein is tRNA (guanine-N(7)-)-methyltransferase of Streptomyces coelicolor (strain ATCC BAA-471 / A3(2) / M145).